We begin with the raw amino-acid sequence, 457 residues long: ATP synthase subunit beta (457 aa).

Residue 147-154 (GGAGVGKT) coordinates ATP.

This sequence belongs to the ATPase alpha/beta chains family. F-type ATPases have 2 components, CF(1) - the catalytic core - and CF(0) - the membrane proton channel. CF(1) has five subunits: alpha(3), beta(3), gamma(1), delta(1), epsilon(1). CF(0) has three main subunits: a(1), b(2) and c(9-12). The alpha and beta chains form an alternating ring which encloses part of the gamma chain. CF(1) is attached to CF(0) by a central stalk formed by the gamma and epsilon chains, while a peripheral stalk is formed by the delta and b chains.

Its subcellular location is the cell inner membrane. The catalysed reaction is ATP + H2O + 4 H(+)(in) = ADP + phosphate + 5 H(+)(out). Functionally, produces ATP from ADP in the presence of a proton gradient across the membrane. The catalytic sites are hosted primarily by the beta subunits. This chain is ATP synthase subunit beta, found in Actinobacillus pleuropneumoniae serotype 5b (strain L20).